The primary structure comprises 475 residues: Beta-amyrin 28-monooxygenase (475 aa).

A helical membrane pass occupies residues Y2 to R22. C422 serves as a coordination point for heme.

It belongs to the cytochrome P450 family. The cofactor is heme.

The protein resides in the membrane. It catalyses the reaction beta-amyrin + 3 reduced [NADPH--hemoprotein reductase] + 3 O2 = oleanolate + 3 oxidized [NADPH--hemoprotein reductase] + 4 H2O + 4 H(+). In terms of biological role, catalyzes the oxidation of the methyl group to a carboxyl group at the C-28 position of beta-amyrin to form oleanolate. In Barbarea vulgaris (Yellow rocket), this protein is Beta-amyrin 28-monooxygenase.